The following is a 134-amino-acid chain: Holo-[acyl-carrier-protein] synthase (134 aa).

Mg(2+) is bound by residues D8 and E57.

It belongs to the P-Pant transferase superfamily. AcpS family. Mg(2+) serves as cofactor.

It is found in the cytoplasm. It carries out the reaction apo-[ACP] + CoA = holo-[ACP] + adenosine 3',5'-bisphosphate + H(+). Functionally, transfers the 4'-phosphopantetheine moiety from coenzyme A to a Ser of acyl-carrier-protein. This Roseobacter denitrificans (strain ATCC 33942 / OCh 114) (Erythrobacter sp. (strain OCh 114)) protein is Holo-[acyl-carrier-protein] synthase.